Consider the following 300-residue polypeptide: Hairy/enhancer-of-split related with YRPW motif protein 1 (300 aa).

Residues 1–52 (MKRGHDYSSSDSELDENIEVEKESADENGNLSSAAGSMSPSTSSQILARKRR) form a disordered region. Positions 32–44 (SSAAGSMSPSTSS) are enriched in low complexity. Residues 48 to 103 (ARKRRRGIIEKRRRDRINNSLSELRRLVPSAFEKQGSAKLEKAEILQMTVDHLKML) form the bHLH domain. The Orange domain occupies 121 to 157 (YRSLGFRECLAEVARYLSIIEGMDTTDPLRVRLVSHL). A compositionally biased stretch (low complexity) spans 199 to 210 (AHTSANSTSSST). 2 disordered regions span residues 199–232 (AHTSANSTSSSTEAHHQNRLPGSPHAETSSLRVP) and 278–300 (LSPTTPTPSGKPYRPWGTEIGAF). The short motif at 290–293 (YRPW) is the YRPW motif element.

The protein belongs to the HEY family. As to quaternary structure, efficient DNA binding requires dimerization with another bHLH protein. Binds DNA in the form of homodimer or more strongly as a heterodimer with hes1/hairy1 or hes4/hairy2b. Also weakly interacts with the bHLH proteins hes2, neurod1 and neurod4/ath3. Interacts (via Orange domain) with ccdc89/boip (via C-terminus).

It localises to the nucleus. Functionally, downstream effector of Notch signaling. Transcriptional repressor which binds preferentially to the canonical E box sequence 5'-CACGTG-3'. Acts as a suppressor of neurogenesis by antagonizing proneural gene function. Functions during floorplate development. Plays a role in pronephros formation in the inhibition of distal tubule and duct cell fates and the promotion of glomus and proximal tubule formation. The sequence is that of Hairy/enhancer-of-split related with YRPW motif protein 1 (hey1) from Xenopus tropicalis (Western clawed frog).